A 234-amino-acid polypeptide reads, in one-letter code: uncharacterized protein (234 aa).

The disordered stretch occupies residues 65-89 (QNANRQEGRRRGLRPSSDGNLRREN). The RING-type zinc-finger motif lies at 185 to 220 (CAVCLHNKVCVLFQKCKHVITCGPCSLRIKECPVCK).

Belongs to the IIV-6 175R/332L family.

This is an uncharacterized protein from Acheta domesticus (House cricket).